Reading from the N-terminus, the 591-residue chain is Adenine deaminase (591 aa).

Belongs to the metallo-dependent hydrolases superfamily. Adenine deaminase family. As to quaternary structure, homodimer. The cofactor is Mn(2+).

The catalysed reaction is adenine + H2O + H(+) = hypoxanthine + NH4(+). The protein is Adenine deaminase of Edwardsiella ictaluri (strain 93-146).